A 261-amino-acid polypeptide reads, in one-letter code: MICOS complex subunit Mic25 (261 aa).

Gly2 carries N-myristoyl glycine lipidation. A phosphoserine mark is found at Ser13, Ser31, and Ser33. Disordered regions lie at residues 39–59 (KDCSQPSAGEQLAPGPGPECS), 81–114 (CGPAEGTYKAPQGDFKVSRAENSDGQQSSAVKED), and 140–165 (TEKHLKASLPKKKATHEQQQSDRLTR). A coiled-coil region spans residues 109–202 (SAVKEDLKKF…AELYKLSSQQ (94 aa)). The segment covering 154–165 (THEQQQSDRLTR) has biased composition (basic and acidic residues). A CHCH domain is found at 220-261 (EPVCSGLQAQILRCYRDHLHEVLLCSDLAKAYQHCVSTARKG). 2 short sequence motifs (cx9C motif) span residues 223-233 (CSGLQAQILRC) and 244-254 (CSDLAKAYQHC). Cystine bridges form between Cys223/Cys254 and Cys233/Cys244.

Belongs to the MICOS complex subunit Mic19 family. Metazoan Mic25 subfamily. In terms of assembly, component of the mitochondrial contact site and cristae organizing system (MICOS) complex, composed of at least MICOS10/MIC10, CHCHD3/MIC19, CHCHD6/MIC25, APOOL/MIC27, IMMT/MIC60, APOO/MIC23/MIC26 and MICOS13/MIC13. This complex was also known under the names MINOS or MitOS complex. The MICOS complex associates with mitochondrial outer membrane proteins SAMM50, MTX1 and MTX2 (together described as components of the mitochondrial outer membrane sorting assembly machinery (SAM) complex) and DNAJC11, mitochondrial inner membrane protein TMEM11 and with HSPA9. The MICOS and SAM complexes together with DNAJC11 are part of a large protein complex spanning both membranes termed the mitochondrial intermembrane space bridging (MIB) complex. Interacts with DISC1. Interacts with IMMT/MIC60.

It localises to the mitochondrion inner membrane. Its subcellular location is the mitochondrion. Functionally, component of the MICOS complex, a large protein complex of the mitochondrial inner membrane that plays crucial roles in the maintenance of crista junctions, inner membrane architecture, and formation of contact sites to the outer membrane. The sequence is that of MICOS complex subunit Mic25 (Chchd6) from Rattus norvegicus (Rat).